The primary structure comprises 688 residues: Eukaryotic translation initiation factor 3 subunit B (688 aa).

The segment at 1–28 (MAKKKGDQYDSDGAEDQDYDEEPVFEDP) is disordered. Residues 9 to 25 (YDSDGAEDQDYDEEPVF) are compositionally biased toward acidic residues. An RRM domain is found at 57 to 141 (NVIVVDNIPV…HTLLVNLFSD (85 aa)). 6 WD repeats span residues 208-246 (RERFTETYVKWSPLGTYIVTFHKQGVVIWGGSSFTKINK), 247-287 (FAHS…EKRS), 291-329 (DGSSNMSMFRWSHDDKYVARMGDNAIHVYETNTFYLLDK), 332-367 (IKVQGIRNFSWSPTDNIIAYWMSEDIDAPARVTLLE), 440-482 (EVKE…EPTM), and 527-572 (GDHY…KRVN). The stretch at 612-643 (DRVRMTRASKELLEKRAKLREQFVEYRAKRVN) forms a coiled coil.

It belongs to the eIF-3 subunit B family. In terms of assembly, component of the eukaryotic translation initiation factor 3 (eIF-3) complex.

It localises to the cytoplasm. Functionally, RNA-binding component of the eukaryotic translation initiation factor 3 (eIF-3) complex, which is involved in protein synthesis of a specialized repertoire of mRNAs and, together with other initiation factors, stimulates binding of mRNA and methionyl-tRNAi to the 40S ribosome. The eIF-3 complex specifically targets and initiates translation of a subset of mRNAs involved in cell proliferation. The protein is Eukaryotic translation initiation factor 3 subunit B of Culex quinquefasciatus (Southern house mosquito).